The chain runs to 454 residues: Bifunctional protein GlmU (454 aa).

The interval 1 to 231 (MSRPTVSLIV…EAETLGVNTR (231 aa)) is pyrophosphorylase. UDP-N-acetyl-alpha-D-glucosamine-binding positions include 11–14 (LAAG), K25, Q78, 83–84 (GT), 106–108 (YGD), G143, E157, N172, and N229. Residue D108 coordinates Mg(2+). N229 contributes to the Mg(2+) binding site. Residues 232–252 (AQLAAAEAEFQRRARAAALED) are linker. The N-acetyltransferase stretch occupies residues 253–454 (GVTLTAPDTV…ARDASKKGTN (202 aa)). UDP-N-acetyl-alpha-D-glucosamine contacts are provided by R318 and K336. H348 serves as the catalytic Proton acceptor. Residues Y351 and N362 each coordinate UDP-N-acetyl-alpha-D-glucosamine. Residues A365, 371–372 (NY), S390, S408, and R425 each bind acetyl-CoA.

It in the N-terminal section; belongs to the N-acetylglucosamine-1-phosphate uridyltransferase family. This sequence in the C-terminal section; belongs to the transferase hexapeptide repeat family. As to quaternary structure, homotrimer. Requires Mg(2+) as cofactor.

It localises to the cytoplasm. The enzyme catalyses alpha-D-glucosamine 1-phosphate + acetyl-CoA = N-acetyl-alpha-D-glucosamine 1-phosphate + CoA + H(+). It catalyses the reaction N-acetyl-alpha-D-glucosamine 1-phosphate + UTP + H(+) = UDP-N-acetyl-alpha-D-glucosamine + diphosphate. The protein operates within nucleotide-sugar biosynthesis; UDP-N-acetyl-alpha-D-glucosamine biosynthesis; N-acetyl-alpha-D-glucosamine 1-phosphate from alpha-D-glucosamine 6-phosphate (route II): step 2/2. It functions in the pathway nucleotide-sugar biosynthesis; UDP-N-acetyl-alpha-D-glucosamine biosynthesis; UDP-N-acetyl-alpha-D-glucosamine from N-acetyl-alpha-D-glucosamine 1-phosphate: step 1/1. Its pathway is bacterial outer membrane biogenesis; LPS lipid A biosynthesis. Catalyzes the last two sequential reactions in the de novo biosynthetic pathway for UDP-N-acetylglucosamine (UDP-GlcNAc). The C-terminal domain catalyzes the transfer of acetyl group from acetyl coenzyme A to glucosamine-1-phosphate (GlcN-1-P) to produce N-acetylglucosamine-1-phosphate (GlcNAc-1-P), which is converted into UDP-GlcNAc by the transfer of uridine 5-monophosphate (from uridine 5-triphosphate), a reaction catalyzed by the N-terminal domain. This chain is Bifunctional protein GlmU, found in Cereibacter sphaeroides (strain ATCC 17025 / ATH 2.4.3) (Rhodobacter sphaeroides).